The chain runs to 534 residues: ATP synthase subunit alpha 2 (534 aa).

175–182 is a binding site for ATP; sequence GDRQTGKT. Residues 506–534 are disordered; the sequence is FQPAPEPETAPKTKTDIKPKPKAAGGESS. Residues 514–524 are compositionally biased toward basic and acidic residues; sequence TAPKTKTDIKP.

Belongs to the ATPase alpha/beta chains family. F-type ATPases have 2 components, CF(1) - the catalytic core - and CF(0) - the membrane proton channel. CF(1) has five subunits: alpha(3), beta(3), gamma(1), delta(1), epsilon(1). CF(0) has three main subunits: a(1), b(2) and c(9-12). The alpha and beta chains form an alternating ring which encloses part of the gamma chain. CF(1) is attached to CF(0) by a central stalk formed by the gamma and epsilon chains, while a peripheral stalk is formed by the delta and b chains.

It is found in the cell inner membrane. It carries out the reaction ATP + H2O + 4 H(+)(in) = ADP + phosphate + 5 H(+)(out). Its function is as follows. Produces ATP from ADP in the presence of a proton gradient across the membrane. The alpha chain is a regulatory subunit. This Albidiferax ferrireducens (strain ATCC BAA-621 / DSM 15236 / T118) (Rhodoferax ferrireducens) protein is ATP synthase subunit alpha 2.